The sequence spans 135 residues: Large ribosomal subunit protein uL22c (135 aa).

The protein belongs to the universal ribosomal protein uL22 family. Part of the 50S ribosomal subunit.

It localises to the plastid. Its function is as follows. This protein binds specifically to 23S rRNA. The globular domain of the protein is located near the polypeptide exit tunnel on the outside of the subunit, while an extended beta-hairpin is found that lines the wall of the exit tunnel in the center of the 70S ribosome. In Cuscuta exaltata (Tall dodder), this protein is Large ribosomal subunit protein uL22c (rpl22).